Here is a 373-residue protein sequence, read N- to C-terminus: Zinc finger CCCH domain-containing protein 15 homolog (373 aa).

The tract at residues 1–27 is disordered; that stretch reads MPPKQAQSKKTVEKEKKKKVEDKTFGL. Positions 10–25 are enriched in basic and acidic residues; the sequence is KTVEKEKKKKVEDKTF. 2 C3H1-type zinc fingers span residues 95-123 and 167-205; these read DPKS…HDLA and KPTA…HCLP. Positions 252–326 form a coiled coil; it reads KEEKRLQKEK…ALANQINTSL (75 aa). The disordered stretch occupies residues 325 to 373; it reads SLFTDGGVLPSDDDDDDDDDDDDDEDGDDEEEDDDEEEGEYEEEEASDE. Residues 335–373 show a composition bias toward acidic residues; it reads SDDDDDDDDDDDDDEDGDDEEEDDDEEEGEYEEEEASDE.

Belongs to the ZC3H15/TMA46 family.

The polypeptide is Zinc finger CCCH domain-containing protein 15 homolog (Dictyostelium discoideum (Social amoeba)).